A 1265-amino-acid polypeptide reads, in one-letter code: Methionine synthase (1265 aa).

The Hcy-binding domain occupies 19–338 (QDEIEAILQE…DHIREIAEAV (320 aa)). Zn(2+) is bound by residues C260, C323, and C324. One can recognise a Pterin-binding domain in the interval 371–632 (FVNIGERCNV…IHKELLQLCE (262 aa)). (6S)-5,6,7,8-tetrahydrofolate-binding positions include 382 to 384 (GSR), D449, N470, D537, N579, R585, and R591. Residues 662-759 (QTDEWRNGPL…FMEKEREETK (98 aa)) enclose the B12-binding N-terminal domain. Methylcob(III)alamin-binding positions include E709, 782 to 786 (GDVHD), H785, S830, T834, and A886. One can recognise a B12-binding domain in the interval 772–907 (QGTIVLATVK…DENLKDEYFE (136 aa)). Residues 923-1265 (SLKERRYLTL…LGPILGYDTD (343 aa)) enclose the AdoMet activation domain. S-adenosyl-L-methionine is bound by residues D974, R1172, and 1227-1228 (YF). Residue T1264 is modified to Phosphothreonine.

It belongs to the vitamin-B12 dependent methionine synthase family. In terms of assembly, monomer. Dimer. Forms a multiprotein complex with MMACHC, MMADHC and MTRR. Methylcob(III)alamin serves as cofactor. It depends on Zn(2+) as a cofactor.

It localises to the cytoplasm. It carries out the reaction (6S)-5-methyl-5,6,7,8-tetrahydrofolate + L-homocysteine = (6S)-5,6,7,8-tetrahydrofolate + L-methionine. It functions in the pathway amino-acid biosynthesis; L-methionine biosynthesis via de novo pathway; L-methionine from L-homocysteine (MetH route): step 1/1. Its function is as follows. Catalyzes the transfer of a methyl group from methylcob(III)alamin (MeCbl) to homocysteine, yielding enzyme-bound cob(I)alamin and methionine in the cytosol. MeCbl is an active form of cobalamin (vitamin B12) used as a cofactor for methionine biosynthesis. Cob(I)alamin form is regenerated to MeCbl by a transfer of a methyl group from 5-methyltetrahydrofolate. The processing of cobalamin in the cytosol occurs in a multiprotein complex composed of at least MMACHC, MMADHC, MTRR (methionine synthase reductase) and MTR which may contribute to shuttle safely and efficiently cobalamin towards MTR in order to produce methionine. The protein is Methionine synthase (MTR) of Bos taurus (Bovine).